Consider the following 873-residue polypeptide: Coatomer subunit gamma-2 (873 aa).

Basic and acidic residues predominate over residues 1–11 (MIKKFDKKDEE). The tract at residues 1-21 (MIKKFDKKDEESGSGSNPFQN) is disordered. HEAT repeat units lie at residues 64 to 101 (TEAT…ISED), 283 to 320 (RELA…KHPS), 321 to 355 (AVTA…GSES), 356 to 392 (SVDR…KYPR), 394 to 430 (HSAM…ENPE), and 467 to 504 (PQPS…QNDD).

The protein belongs to the COPG family. Oligomeric complex.

The protein localises to the cytoplasm. It localises to the golgi apparatus membrane. It is found in the cytoplasmic vesicle. The protein resides in the COPI-coated vesicle membrane. Its function is as follows. The coatomer is a cytosolic protein complex that binds to dilysine motifs and reversibly associates with Golgi non-clathrin-coated vesicles, which further mediate biosynthetic protein transport from the ER, via the Golgi up to the trans Golgi network. Coatomer complex is required for budding from Golgi membranes, and is essential for the retrograde Golgi-to-ER transport of dilysine-tagged proteins. This Takifugu rubripes (Japanese pufferfish) protein is Coatomer subunit gamma-2 (copg2).